The primary structure comprises 253 residues: MITKRIIPCLDVDMGRVVKGVNFVNLKDVGDPVEIAEFYNKEGADEIVFLDISATHEGRATMIDVVRKTAEKLFIPLTVGGGIKNINDFRDILRAGADKISVNSSAIRNPKLIKKAAECFGSQCVVVAIDGKKRKDKDGWNVFINGGRIDTGLDAIEWARKVEKLGAGEILLTSMDADGTKEGYDLEFTNEVSKTVNIPVIASGGCGKLKHFGEILKKSSADAALAASLFHFKELSIEEVKNYLKKEGFSVRL.

Residues aspartate 11 and aspartate 130 contribute to the active site.

Belongs to the HisA/HisF family. In terms of assembly, heterodimer of HisH and HisF.

The protein resides in the cytoplasm. It catalyses the reaction 5-[(5-phospho-1-deoxy-D-ribulos-1-ylimino)methylamino]-1-(5-phospho-beta-D-ribosyl)imidazole-4-carboxamide + L-glutamine = D-erythro-1-(imidazol-4-yl)glycerol 3-phosphate + 5-amino-1-(5-phospho-beta-D-ribosyl)imidazole-4-carboxamide + L-glutamate + H(+). It functions in the pathway amino-acid biosynthesis; L-histidine biosynthesis; L-histidine from 5-phospho-alpha-D-ribose 1-diphosphate: step 5/9. IGPS catalyzes the conversion of PRFAR and glutamine to IGP, AICAR and glutamate. The HisF subunit catalyzes the cyclization activity that produces IGP and AICAR from PRFAR using the ammonia provided by the HisH subunit. This is Imidazole glycerol phosphate synthase subunit HisF from Clostridium botulinum (strain 657 / Type Ba4).